We begin with the raw amino-acid sequence, 393 residues long: Prokineticin receptor 1 (393 aa).

Residues 1 to 63 (MEITMGVMDE…NSRTFFAAKI (63 aa)) lie on the Extracellular side of the membrane. N-linked (GlcNAc...) asparagine glycosylation is found at Asn-11, Asn-14, and Asn-36. The helical transmembrane segment at 64 to 84 (VIGMALVGIMLVCGIGNFIFI) threads the bilayer. Residues 85-98 (AALARYKKLRNLTN) are Cytoplasmic-facing. Residues 99-119 (LLIANLAISDFLVAIVCCPFE) traverse the membrane as a helical segment. Over 120 to 145 (MDYYVVRQLSWEHGHVLCASVNYLRT) the chain is Extracellular. Cys-137 and Cys-217 are disulfide-bonded. The helical transmembrane segment at 146-166 (VSLYVSTNALLAIAIDRYLAI) threads the bilayer. Residues 167–179 (VHPLRPRMKYQTA) are Cytoplasmic-facing. The helical transmembrane segment at 180–200 (TGLIALVWVVSILVAIPSAYF) threads the bilayer. Over 201 to 232 (TTETVLVIVKSQEKIFCGQIWPVDQQIYYKSY) the chain is Extracellular. The chain crosses the membrane as a helical span at residues 233 to 253 (FLFIFGIEFVGPVVTMTLCYA). At 254–282 (RISRELWFKAVPGFQTEQIRKRLRCRRKT) the chain is on the cytoplasmic side. The chain crosses the membrane as a helical span at residues 283–303 (VLVLMCILTAYVLCWAPFYGF). The Extracellular segment spans residues 304–322 (AIVRDFFPTVFVKEKHYLT). Residues 323 to 343 (AFYVVECIAMSNSMINTVCFV) traverse the membrane as a helical segment. Topologically, residues 344–393 (TVKNNTIKYFKKIMLLHWKASYNGSKSSGDLDLKTTGVPATEEVDCIGLK) are cytoplasmic.

Belongs to the G-protein coupled receptor 1 family.

The protein resides in the cell membrane. Its function is as follows. Receptor for prokineticin 1. Exclusively coupled to the G(q) subclass of heteromeric G proteins. Activation leads to mobilization of calcium, stimulation of phosphoinositide turnover and activation of p44/p42 mitogen-activated protein kinase. May play a role during early pregnancy. This is Prokineticin receptor 1 (PROKR1) from Bos taurus (Bovine).